The sequence spans 312 residues: uncharacterized protein (312 aa).

Residue 112–118 (LIGLPMV) participates in ATP binding.

Belongs to the MurCDEF family.

This is an uncharacterized protein from Methanothermobacter thermautotrophicus (strain ATCC 29096 / DSM 1053 / JCM 10044 / NBRC 100330 / Delta H) (Methanobacterium thermoautotrophicum).